The primary structure comprises 200 residues: MAFAEQTPLTLHRRDLCSRSIWLARKIRSDLTALMESYVKHQGLNKNINLDSVDGVPVASTDRWSEMTEAERLQENLQAYRTFQGMLTKLLEDQRVHFTPTEGDFHQAIHTLMLQVSAFAYQLEELMVLLEQKIPENEADGMPATVGDGGLFEKKLWGLKVLQELSQWTVRSIHDLRVISSHQMGISALESHYGAKDKQM.

It belongs to the CNTF family. As to expression, nervous system.

Its subcellular location is the cytoplasm. In terms of biological role, CNTF is a survival factor for various neuronal cell types. Seems to prevent the degeneration of motor axons after axotomy. This Rattus norvegicus (Rat) protein is Ciliary neurotrophic factor (Cntf).